Here is a 389-residue protein sequence, read N- to C-terminus: Aromatic-amino-acid aminotransferase 2 (389 aa).

K233 carries the N6-(pyridoxal phosphate)lysine modification.

Belongs to the class-I pyridoxal-phosphate-dependent aminotransferase family. Homodimer. The cofactor is pyridoxal 5'-phosphate.

It catalyses the reaction an aromatic L-alpha-amino acid + 2-oxoglutarate = an aromatic oxo-acid + L-glutamate. Its function is as follows. Catalyzes the transamination of phenylalanine, tyrosine and tryptophan. Shows virtually no activity towards aspartic acid, alanine, valine or isoleucine. This is Aromatic-amino-acid aminotransferase 2 from Thermococcus litoralis (strain ATCC 51850 / DSM 5473 / JCM 8560 / NS-C).